Reading from the N-terminus, the 241-residue chain is Tetraspanin-1 (241 aa).

Residues 1-11 (MQCFSFIKTMM) lie on the Cytoplasmic side of the membrane. Residues 12–32 (ILFNLLIFLCGAALLAVGIWV) traverse the membrane as a helical segment. Over 33–52 (SIDGASFLKIFGPLSSSAMQ) the chain is Extracellular. Residues 53–73 (FVNVGYFLIAAGVVVFALGFL) form a helical membrane-spanning segment. Topologically, residues 74 to 88 (GCYGAKTESKCALVT) are cytoplasmic. Residues 89–109 (FFFILLLIFIAEVAAAVVALV) form a helical membrane-spanning segment. The Extracellular segment spans residues 110–211 (YTTMAEHFLT…NQLLYDIRTN (102 aa)). 4 N-linked (GlcNAc...) asparagine glycosylation sites follow: Asn141, Asn154, Asn178, and Asn184. A helical transmembrane segment spans residues 212–232 (AVTVGGVAAGIGGLELAAMIV). At 233 to 241 (SMYLYCNLQ) the chain is on the cytoplasmic side.

Belongs to the tetraspanin (TM4SF) family. In terms of assembly, interacts with SLC19A2. Interacts with NTRK1/TRKA.

The protein resides in the cell membrane. The protein localises to the lysosome membrane. Structural component of specialized membrane microdomains known as tetraspanin-enriched microdomains (TERMs), which act as platforms for receptor clustering and signaling. Participates thereby in diverse biological functions such as cell signal transduction, adhesion, migration and protein trafficking. Regulates neuronal differentiation in response to NGF by facilitating NGF-mediated activation of NTRK1/TRKA receptor tyrosine kinase and subsequent downstream signaling pathways. Plays a role in the inhibition of TNFalpha-induced apoptosis. Mechanistically, inhibits the NF-kappa-B signaling pathway by blocking phosphorylation of CHUK. Also promotes the stability of the thiamine transporter 1/SLC19A2 in intestinal epithelial cells leading to an increase of thiamine uptake process. This Homo sapiens (Human) protein is Tetraspanin-1 (TSPAN1).